Reading from the N-terminus, the 72-residue chain is Protein SlyX homolog (72 aa).

Positions 53–72 (KDISPSNIRREEEETPPPHY) are disordered.

This sequence belongs to the SlyX family.

The polypeptide is Protein SlyX homolog (Marinobacter nauticus (strain ATCC 700491 / DSM 11845 / VT8) (Marinobacter aquaeolei)).